We begin with the raw amino-acid sequence, 158 residues long: pH 6 antigen (158 aa).

The signal sequence occupies residues 1–26; the sequence is MKMKCFAKNALAVTTLMIAACGMANA.

In terms of assembly, forms a homomer composed of subunits assembled in a large structure.

The protein resides in the fimbrium. Its function is as follows. Fibrillar structure, part of fimbriae, necessary for full virulence. The polypeptide is pH 6 antigen (psaA) (Yersinia pestis).